The primary structure comprises 1151 residues: ATP-dependent helicase/deoxyribonuclease subunit B (1151 aa).

The UvrD-like helicase ATP-binding domain maps to 1–273 (MALRLVLGRA…LALAAGVRVE (273 aa)). 8-15 (GRAGSGKT) serves as a coordination point for ATP. Positions 282–578 (PPRFREAPAL…KLRLIPPALD (297 aa)) constitute a UvrD-like helicase C-terminal domain. Residues Cys-788, Cys-1107, Cys-1110, and Cys-1116 each contribute to the [4Fe-4S] cluster site.

The protein belongs to the helicase family. AddB/RexB type 1 subfamily. Heterodimer of AddA and AddB. Mg(2+) serves as cofactor. [4Fe-4S] cluster is required as a cofactor.

Functionally, the heterodimer acts as both an ATP-dependent DNA helicase and an ATP-dependent, dual-direction single-stranded exonuclease. Recognizes the chi site generating a DNA molecule suitable for the initiation of homologous recombination. The AddB subunit has 5' -&gt; 3' nuclease activity but not helicase activity. The sequence is that of ATP-dependent helicase/deoxyribonuclease subunit B from Moorella thermoacetica (strain ATCC 39073 / JCM 9320).